A 428-amino-acid polypeptide reads, in one-letter code: Protein ECERIFERUM 26 (428 aa).

The disordered stretch occupies residues 1–36 (MGRSQEQGQGQGPVHSIRLSTVGATRPTETGTTHEP). Over residues 21 to 36 (TVGATRPTETGTTHEP) the composition is skewed to low complexity.

This sequence belongs to the plant acyltransferase family. In terms of tissue distribution, highly expressed in leaves.

The protein localises to the cytoplasm. It localises to the cytosol. In terms of biological role, involved in biosynthesis of the epicuticular wax. Plays a role in very-long-chain fatty acid (VLCFA) biosynthesis and is required for C30 fatty acid elongation in leaf. Despite its classification as a BAHD acyltransferase based on sequence homology, CER26 does not seem to share the catalytic mechanism of the members of the BAHD family. The polypeptide is Protein ECERIFERUM 26 (CER26) (Arabidopsis thaliana (Mouse-ear cress)).